We begin with the raw amino-acid sequence, 277 residues long: 2-dehydro-3-deoxyphosphooctonate aldolase (277 aa).

This sequence belongs to the KdsA family.

Its subcellular location is the cytoplasm. The catalysed reaction is D-arabinose 5-phosphate + phosphoenolpyruvate + H2O = 3-deoxy-alpha-D-manno-2-octulosonate-8-phosphate + phosphate. It participates in carbohydrate biosynthesis; 3-deoxy-D-manno-octulosonate biosynthesis; 3-deoxy-D-manno-octulosonate from D-ribulose 5-phosphate: step 2/3. It functions in the pathway bacterial outer membrane biogenesis; lipopolysaccharide biosynthesis. In Vesicomyosocius okutanii subsp. Calyptogena okutanii (strain HA), this protein is 2-dehydro-3-deoxyphosphooctonate aldolase.